The primary structure comprises 214 residues: SH3 domain-binding glutamic acid-rich protein (214 aa).

Positions Asn-61–Pro-67 match the SH3-binding motif. The segment at Pro-101–Ser-214 is disordered. Residues Gly-129–Glu-144 show a composition bias toward basic and acidic residues. Acidic residues-rich tracts occupy residues Glu-162–Glu-192 and Glu-198–Ser-214.

It belongs to the SH3BGR family.

The polypeptide is SH3 domain-binding glutamic acid-rich protein (Sh3bgr) (Mus musculus (Mouse)).